A 229-amino-acid chain; its full sequence is Probable queuosine precursor transporter (229 aa).

7 helical membrane-spanning segments follow: residues 6-26, 28-48, 49-69, 86-106, 118-138, 160-182, and 192-214; these read FWIF…KGFG, MGLF…VVKT, VELF…IFFA, VWLG…VLLF, LETI…AFIF, LWLR…FTAV, and VWLH…SLPY.

This sequence belongs to the vitamin uptake transporter (VUT/ECF) (TC 2.A.88) family. Q precursor transporter subfamily.

The protein localises to the cell membrane. Involved in the import of queuosine (Q) precursors, required for Q precursor salvage. This Bacillus subtilis (strain 168) protein is Probable queuosine precursor transporter (ypdP).